The chain runs to 1091 residues: E3 ubiquitin-protein ligase TRIM33 (1091 aa).

A compositionally biased stretch (gly residues) spans 1 to 13 (MADNKGGGGGGGE). Positions 1 to 87 (MADNKGGGGG…SATPASSSSS (87 aa)) are disordered. Residues 52–87 (APVAAVPTDTPAEENPAPSSSSVASSSATPASSSSS) are compositionally biased toward low complexity. The segment at 97–154 (CAVCKLSLQSRDTEPKLLPCLHSFCRRCLPEPERQLSVPGGTNGDIQQVGVIRCLVCR) adopts an RING-type 1 zinc-finger fold. A B box-type 1; atypical zinc finger spans residues 180–227 (KSEQVCTSCEDNASAVGFCVECGEWLCKTCIEAHQRVKFTKDHIITNK). Residues cysteine 185, cysteine 188, cysteine 209, histidine 213, cysteine 245, histidine 248, cysteine 268, and histidine 273 each coordinate Zn(2+). The B box-type 2 zinc finger occupies 240–281 (QRPVFCPVHKQEQLKLFCETCDRLTCRDCQLLEHKEHRYQFL). Residues 269–361 (QLLEHKEHRY…QLESVTKERQ (93 aa)) are a coiled coil. 2 disordered regions span residues 672 to 779 (LPQP…TPPL) and 821 to 844 (GKSAVRNSMHRPPRGGGGGDGSNK). Positions 675–721 (PTSNMNPSPAPSAMSPGSTGLSNSHTPVRPPSTSSTGSRGSCGSSSR) are enriched in low complexity. The span at 754-763 (KQEKAEDGRR) shows a compositional bias: basic and acidic residues. The span at 768–779 (LSSPESSLTPPL) shows a compositional bias: low complexity. Residues 850 to 897 (EDWCAVCQNGGDLLCCEKCPKVFHLTCHVPTLLSFPSGEWICTFCRDL) form a PHD-type zinc finger. A Bromo domain is found at 920–1043 (GLSPVDQMKC…LYFEEKLPAI (124 aa)). The segment at 1051–1091 (PLPEFEAEDDDGDVTDDSDDDDFVQPRRKRLKSEERPVHIK) is disordered. A compositionally biased stretch (acidic residues) spans 1055-1073 (FEAEDDDGDVTDDSDDDDF). Positions 1082–1091 (KSEERPVHIK) are enriched in basic and acidic residues.

May interact with smad4.

The protein resides in the nucleus. The catalysed reaction is S-ubiquitinyl-[E2 ubiquitin-conjugating enzyme]-L-cysteine + [acceptor protein]-L-lysine = [E2 ubiquitin-conjugating enzyme]-L-cysteine + N(6)-ubiquitinyl-[acceptor protein]-L-lysine.. It participates in protein modification; protein ubiquitination. Its function is as follows. Acts as an E3 ubiquitin-protein ligase for smad4. Promotes ectoderm embryonic development at the expense of other germ layers. Inhibits mesodermal differentiation. Promotes neural development of the ectoderm. Promotes smad4 alpha degradation via the ubiquitin proteasome pathway. May act as a transcriptional repressor. In Xenopus laevis (African clawed frog), this protein is E3 ubiquitin-protein ligase TRIM33 (trim33).